We begin with the raw amino-acid sequence, 62 residues long: Large ribosomal subunit protein uL30 (62 aa).

It belongs to the universal ribosomal protein uL30 family. In terms of assembly, part of the 50S ribosomal subunit.

The chain is Large ribosomal subunit protein uL30 from Gluconobacter oxydans (strain 621H) (Gluconobacter suboxydans).